The sequence spans 388 residues: Succinyl-diaminopimelate desuccinylase (388 aa).

His71 provides a ligand contact to Zn(2+). Asp73 is an active-site residue. Zn(2+) is bound at residue Asp104. Residue Glu143 is the Proton acceptor of the active site. Residues Glu144, Glu172, and His361 each coordinate Zn(2+).

The protein belongs to the peptidase M20A family. DapE subfamily. As to quaternary structure, homodimer. The cofactor is Zn(2+). Requires Co(2+) as cofactor.

The enzyme catalyses N-succinyl-(2S,6S)-2,6-diaminopimelate + H2O = (2S,6S)-2,6-diaminopimelate + succinate. It participates in amino-acid biosynthesis; L-lysine biosynthesis via DAP pathway; LL-2,6-diaminopimelate from (S)-tetrahydrodipicolinate (succinylase route): step 3/3. Catalyzes the hydrolysis of N-succinyl-L,L-diaminopimelic acid (SDAP), forming succinate and LL-2,6-diaminopimelate (DAP), an intermediate involved in the bacterial biosynthesis of lysine and meso-diaminopimelic acid, an essential component of bacterial cell walls. The chain is Succinyl-diaminopimelate desuccinylase from Bradyrhizobium diazoefficiens (strain JCM 10833 / BCRC 13528 / IAM 13628 / NBRC 14792 / USDA 110).